A 149-amino-acid chain; its full sequence is Transcriptional repressor NrdR (149 aa).

A zinc finger lies at 3–34 (CPFCDTEETKVIDSRLVSDGYQVRRRRECGHC). The ATP-cone domain maps to 49 to 139 (PKIIKTDGTR…VYLSFDDIDQ (91 aa)).

The protein belongs to the NrdR family. Requires Zn(2+) as cofactor.

Functionally, negatively regulates transcription of bacterial ribonucleotide reductase nrd genes and operons by binding to NrdR-boxes. The protein is Transcriptional repressor NrdR of Haemophilus influenzae (strain PittEE).